The sequence spans 376 residues: Neuropeptide receptor 3 (376 aa).

At 1 to 29 (MEGGRNCVMTVQQWQPEYNDMNQIRAIFS) the chain is on the extracellular side. The chain crosses the membrane as a helical span at residues 30–50 (LLYLLVWVGAIVGNTLVLYVL). The Cytoplasmic portion of the chain corresponds to 51–66 (TFNQVSLSVRTVFVGC). A helical membrane pass occupies residues 67–87 (LAGSDLLMCLFSLPITAISIF). The Extracellular portion of the chain corresponds to 88 to 89 (SR). Residues 90-110 (VWVFPAIFCKLIGVFQGGTIF) traverse the membrane as a helical segment. Residues Cys-98 and Cys-175 are joined by a disulfide bond. At 111 to 139 (VSSFTLTVIALDRCVLILRPNQEIVNFPR) the chain is on the cytoplasmic side. The chain crosses the membrane as a helical span at residues 140-160 (AVFIVFCIWLLGYSLALPVGI). Over 161–197 (YSDIAVYDEICGTFCEENWPDFNPDTGRSGIRRAYGL) the chain is Extracellular. A helical membrane pass occupies residues 198 to 218 (SVLVLQFGIPALISSICYWMI). Residues 219–251 (SRVMSDQLARRRGHNIRPESETKLVNRKTRANR) lie on the Cytoplasmic side of the membrane. A helical membrane pass occupies residues 252-272 (MMIVMVVGFVLAWMPFNAVNL). Over 273-284 (YRDLFGISKWYS) the chain is Extracellular. A helical membrane pass occupies residues 285-305 (TVFALCHVCAMCSAVLNPIIY). The Cytoplasmic segment spans residues 306 to 376 (SWFNPQFRQS…NDYRAGDQLL (71 aa)).

Belongs to the G-protein coupled receptor 1 family.

It localises to the cell membrane. G-protein coupled receptor for flp-15 neuropeptides. Receptor activation assays suggest binding to predicted flp-15 peptides, GGPQGPLRF-NH2 and RGPSGPLRF-NH2. Likely involved in Gi/Go-coupled signaling pathways. The polypeptide is Neuropeptide receptor 3 (Caenorhabditis elegans).